Reading from the N-terminus, the 144-residue chain is MGLIKKFKDYFLEEDYEEYEEYEEEYEEEEEMRQATKANTKSNVVSLQSVQKSSKVVLIEPRAYAEAQEIADHLKNRRAVVVNLQRIQHEQAKRIVDFLSGTVYAIGGDIQQVGTKIFLCTPDNVDVTGSISIDSDDDTSMKRW.

Belongs to the SepF family. In terms of assembly, homodimer. Interacts with FtsZ.

The protein resides in the cytoplasm. Cell division protein that is part of the divisome complex and is recruited early to the Z-ring. Probably stimulates Z-ring formation, perhaps through the cross-linking of FtsZ protofilaments. Its function overlaps with FtsA. The polypeptide is Cell division protein SepF (Geobacillus sp. (strain WCH70)).